We begin with the raw amino-acid sequence, 197 residues long: Large ribosomal subunit protein eL15 (197 aa).

Residues 175 to 197 (LRTGRKGSSKSRPSIRANGRLRR) form a disordered region.

It belongs to the eukaryotic ribosomal protein eL15 family.

In Thermoplasma volcanium (strain ATCC 51530 / DSM 4299 / JCM 9571 / NBRC 15438 / GSS1), this protein is Large ribosomal subunit protein eL15 (rpl15e).